A 426-amino-acid polypeptide reads, in one-letter code: uncharacterized protein (426 aa).

It belongs to the serpin family.

This is an uncharacterized protein from Methanosarcina acetivorans (strain ATCC 35395 / DSM 2834 / JCM 12185 / C2A).